Consider the following 119-residue polypeptide: MTRVRRGYIARRRRTKIRLFASTFRGAHSRLTRTATQQKMRALVSIYRDRGRQKREFRRLWIARINAATHENGVSYSRLINDLYKRQLLLNRKIPAQIARYNLNSLYMISNEIIKEKRD.

The protein belongs to the bacterial ribosomal protein bL20 family.

It localises to the plastid. Its subcellular location is the chloroplast. In terms of biological role, binds directly to 23S ribosomal RNA and is necessary for the in vitro assembly process of the 50S ribosomal subunit. It is not involved in the protein synthesizing functions of that subunit. This Amborella trichopoda protein is Large ribosomal subunit protein bL20c.